The chain runs to 94 residues: UPF0298 protein SZO_03600 (94 aa).

This sequence belongs to the UPF0298 family.

The protein resides in the cytoplasm. This Streptococcus equi subsp. zooepidemicus (strain H70) protein is UPF0298 protein SZO_03600.